The sequence spans 401 residues: Chalcone synthase 3 (401 aa).

Cys168 is an active-site residue.

Belongs to the thiolase-like superfamily. Chalcone/stilbene synthases family.

It carries out the reaction (E)-4-coumaroyl-CoA + 3 malonyl-CoA + 3 H(+) = 2',4,4',6'-tetrahydroxychalcone + 3 CO2 + 4 CoA. Its pathway is secondary metabolite biosynthesis; flavonoid biosynthesis. The primary product of this enzyme is 4,2',4',6'-tetrahydroxychalcone (also termed naringenin-chalcone or chalcone) which can under specific conditions spontaneously isomerize into naringenin. This chain is Chalcone synthase 3 (CHS3), found in Sorghum bicolor (Sorghum).